A 902-amino-acid polypeptide reads, in one-letter code: Protein NrfI (902 aa).

Helical transmembrane passes span 9–29, 75–95, 300–320, 335–355, 602–622, 659–679, 731–751, 772–792, 832–852, and 868–888; these read YITLTLLFLLLAVGAAIATFI, FLFHIAFVVILLGAGLTRYLG, VTYLGYALLFLGLLWNLLDPT, LSLLLPLCLLSPLASSLYAQS, LVLGFLVLLSAFGLLFFPPLA, DTYESMLYISWSGMLGALLFF, SYGFFGVGAFLGSFALALFIL, VSLILGLTLLVIGNFLGGIWA, YLFSLLSLWGFGSILMTYFGV, and LPIPLWVYALSLALALLSLIA.

In the C-terminal section; belongs to the CcmF/CycK/Ccl1/NrfE/CcsA family.

The protein resides in the cell membrane. In terms of biological role, may play a role in cytochrome c biogenesis and may be required for maturation of the NrfA protein. The sequence is that of Protein NrfI (nrfI) from Wolinella succinogenes (strain ATCC 29543 / DSM 1740 / CCUG 13145 / JCM 31913 / LMG 7466 / NCTC 11488 / FDC 602W) (Vibrio succinogenes).